Consider the following 405-residue polypeptide: Cytochrome P450 130 (405 aa).

Substrate is bound by residues Asp93 and His97. 7 residues coordinate heme: Arg101, Gly243, Arg295, Tyr318, Ser348, His352, and Cys354.

The protein belongs to the cytochrome P450 family. As to quaternary structure, homodimer. Heme serves as cofactor.

This is Cytochrome P450 130 (cyp130) from Mycobacterium tuberculosis (strain CDC 1551 / Oshkosh).